The sequence spans 235 residues: Glycerol-3-phosphate acyltransferase (235 aa).

6 helical membrane-spanning segments follow: residues 4–24 (LLAI…LVAG), 56–76 (VVTL…VAFF), 94–114 (LLAG…GFKG), 122–142 (AGML…IFLL), 152–172 (VASM…KYIF), and 191–211 (FHDS…LAIL).

It belongs to the PlsY family. As to quaternary structure, probably interacts with PlsX.

It is found in the cell inner membrane. The catalysed reaction is an acyl phosphate + sn-glycerol 3-phosphate = a 1-acyl-sn-glycero-3-phosphate + phosphate. Its pathway is lipid metabolism; phospholipid metabolism. Catalyzes the transfer of an acyl group from acyl-phosphate (acyl-PO(4)) to glycerol-3-phosphate (G3P) to form lysophosphatidic acid (LPA). This enzyme utilizes acyl-phosphate as fatty acyl donor, but not acyl-CoA or acyl-ACP. In Pelodictyon phaeoclathratiforme (strain DSM 5477 / BU-1), this protein is Glycerol-3-phosphate acyltransferase.